We begin with the raw amino-acid sequence, 234 residues long: Viral Fc-gamma receptor-like protein IR11 (234 aa).

Positions 1–23 (MQTYSTPLTLVIVTSLFLFTTQG) are cleaved as a signal peptide. An Ig-like V-type domain is found at 24–122 (SSSNAVEPTK…VKDTGVYLLQ (99 aa)). The Extracellular segment spans residues 24 to 182 (SSSNAVEPTK…DLKRQWSGLS (159 aa)). N-linked (GlcNAc...) asparagine; by host glycosylation is found at N57, N105, and N110. Residues 183–203 (LHCAWVSGMMIFVGALVICFL) form a helical membrane-spanning segment. Topologically, residues 204 to 234 (RSQRIGEQDAEHLRTDLDTEPLLLTVDGDLQ) are cytoplasmic.

The protein belongs to the RL11 family.

It localises to the membrane. The chain is Viral Fc-gamma receptor-like protein IR11 from Homo sapiens (Human).